The primary structure comprises 324 residues: Elongation factor P--(R)-beta-lysine ligase (324 aa).

Substrate is bound at residue 75–77 (SPE). Residues 99–101 (RNK) and N108 each bind ATP. A substrate-binding site is contributed by Y117. ATP is bound at residue 243–244 (EL). Position 250 (E250) interacts with substrate. G299 is a binding site for ATP.

It belongs to the class-II aminoacyl-tRNA synthetase family. EpmA subfamily. As to quaternary structure, homodimer.

It carries out the reaction D-beta-lysine + L-lysyl-[protein] + ATP = N(6)-((3R)-3,6-diaminohexanoyl)-L-lysyl-[protein] + AMP + diphosphate + H(+). Its function is as follows. With EpmB is involved in the beta-lysylation step of the post-translational modification of translation elongation factor P (EF-P). Catalyzes the ATP-dependent activation of (R)-beta-lysine produced by EpmB, forming a lysyl-adenylate, from which the beta-lysyl moiety is then transferred to the epsilon-amino group of a conserved specific lysine residue in EF-P. In Buchnera aphidicola subsp. Acyrthosiphon pisum (strain APS) (Acyrthosiphon pisum symbiotic bacterium), this protein is Elongation factor P--(R)-beta-lysine ligase.